The following is a 224-amino-acid chain: Peptidyl-prolyl cis-trans isomerase FKBP3 (224 aa).

Ala-2 carries the post-translational modification N-acetylalanine. Ser-36 bears the Phosphoserine mark. The tract at residues 88–118 is disordered; sequence VKLSDDKPKDSKSEETLDEGPPKYTKSILKK. The span at 89-102 shows a compositional bias: basic and acidic residues; that stretch reads KLSDDKPKDSKSEE. Lys-99 carries the post-translational modification N6-acetyllysine. One can recognise a PPIase FKBP-type domain in the interval 128 to 224; it reads GDVVHCWYTG…IFEVELVDID (97 aa). The residue at position 152 (Ser-152) is a Phosphoserine. Lys-170 carries the post-translational modification N6-acetyllysine.

It belongs to the FKBP-type PPIase family.

It localises to the nucleus. It catalyses the reaction [protein]-peptidylproline (omega=180) = [protein]-peptidylproline (omega=0). Its activity is regulated as follows. Inhibited preferentially by rapamycin over FK506. FK506- and rapamycin-binding proteins (FKBPs) constitute a family of receptors for the two immunosuppressants which inhibit T-cell proliferation by arresting two distinct cytoplasmic signal transmission pathways. PPIases accelerate the folding of proteins. This chain is Peptidyl-prolyl cis-trans isomerase FKBP3 (Fkbp3), found in Mus musculus (Mouse).